The following is a 531-amino-acid chain: Efflux pump terG (531 aa).

Residues M1–T11 are compositionally biased toward polar residues. The interval M1–G27 is disordered. 13 helical membrane-spanning segments follow: residues G86–G106, A117–V137, I145–I165, F179–L199, W207–I227, I249–N269, Y280–L300, F319–I339, I351–V371, A380–L400, P402–M422, S447–I467, and T488–L508.

Belongs to the major facilitator superfamily.

Its subcellular location is the cell membrane. Functionally, efflux pump that might be required for efficient secretion of terrein or other secondary metabolies produced by the terrein genne cluster. This chain is Efflux pump terG, found in Aspergillus terreus (strain NIH 2624 / FGSC A1156).